An 87-amino-acid chain; its full sequence is Putative autophagy-related protein 8E (87 aa).

A compositionally biased stretch (basic and acidic residues) spans 1–14 (MEERRKEKGKEGRR). The segment at 1–30 (MEERRKEKGKEGRRGKATGHSVDKFSRSNL) is disordered. Gly-87 carries Phosphatidylethanolamine amidated glycine lipidation.

Belongs to the ATG8 family. In terms of assembly, interacts with ATG4. Post-translationally, the C-terminal Gly is amidated with phosphatidylethanolamine by an activating system similar to that for ubiquitin.

Its subcellular location is the cytoplasmic vesicle. The protein resides in the autophagosome membrane. It is found in the vacuole membrane. The protein localises to the cytoplasm. It localises to the cytoskeleton. Ubiquitin-like modifier involved in autophagosomes formation. May mediate the delivery of the autophagosomes to the vacuole via the microtubule cytoskeleton. In Oryza sativa subsp. japonica (Rice), this protein is Putative autophagy-related protein 8E (ATG8E).